Here is a 188-residue protein sequence, read N- to C-terminus: Kappa-casein (188 aa).

A signal peptide spans 1–21; that stretch reads MMKSSFLIVPILALTLPFLGA. 2 O-linked (GalNAc...) threonine glycosylation sites follow: Thr-143 and Thr-148. Position 163 is a phosphothreonine (Thr-163). Ser-167 carries the post-translational modification Phosphoserine; alternate. An O-linked (GalNAc...) serine; alternate glycan is attached at Ser-167. Thr-184 is a glycosylation site (O-linked (GalNAc...) threonine). Ser-185 carries the post-translational modification Phosphoserine.

Belongs to the kappa-casein family. Mammary gland specific. Secreted in milk.

It localises to the secreted. Kappa-casein stabilizes micelle formation, preventing casein precipitation in milk. The sequence is that of Kappa-casein (CSN3) from Sus scrofa (Pig).